The sequence spans 183 residues: MKQLLEFIPLILFFTVYKLYGVQQAAITLVIATVIQLIVLKVLYKKIEKSQWIMGIFAVFFGILTAYFNDLNFLKWKVTIINGLFAAVLLVSQFVFKKPIIQMLLGKELKLPTNVWNRLNLGWAGFFIICMLLNIVISYYFSDDVWATFKTFGFTGLSLIAAIATGVYLYPHLKNVENTNEQA.

5 helical membrane-spanning segments follow: residues 19 to 39 (LYGV…QLIV), 53 to 73 (IMGI…DLNF), 76 to 96 (WKVT…QFVF), 121 to 141 (LGWA…SYYF), and 151 to 171 (TFGF…YLYP).

This sequence belongs to the YciB family.

It is found in the cell inner membrane. Plays a role in cell envelope biogenesis, maintenance of cell envelope integrity and membrane homeostasis. The chain is Inner membrane-spanning protein YciB from Actinobacillus pleuropneumoniae serotype 5b (strain L20).